Reading from the N-terminus, the 262-residue chain is Granzyme A (262 aa).

The signal sequence occupies residues 1–26 (MRNSYRFLASSLSVVVSLLLIPEDVC). A propeptide spans 27 to 28 (EK) (activation peptide). Residues 29-259 (IIGGNEVTPH…HLNWIIMTIK (231 aa)) form the Peptidase S1 domain. Residues C54 and C70 are joined by a disulfide bond. Active-site charge relay system residues include H69 and D114. Cystine bridges form between C148/C218, C179/C197, and C208/C234. N170 is a glycosylation site (N-linked (GlcNAc...) asparagine). S212 acts as the Charge relay system in catalysis.

It belongs to the peptidase S1 family. Granzyme subfamily. As to quaternary structure, homodimer; disulfide-linked. Interacts with APEX1.

It is found in the secreted. Its subcellular location is the cytoplasmic granule. The catalysed reaction is Hydrolysis of proteins, including fibronectin, type IV collagen and nucleolin. Preferential cleavage: -Arg-|-Xaa-, -Lys-|-Xaa- &gt;&gt; -Phe-|-Xaa- in small molecule substrates.. Its function is as follows. Abundant protease in the cytosolic granules of cytotoxic T-cells and NK-cells which activates caspase-independent pyroptosis when delivered into the target cell through the immunological synapse. It cleaves after Lys or Arg. Once delivered into the target cell, acts by catalyzing cleavage of gasdermin-B (GSDMB), releasing the pore-forming moiety of GSDMB, thereby triggering pyroptosis and target cell death. Cleaves APEX1 after 'Lys-31' and destroys its oxidative repair activity. Cleaves the nucleosome assembly protein SET after 'Lys-189', which disrupts its nucleosome assembly activity and allows the SET complex to translocate into the nucleus to nick and degrade the DNA. The chain is Granzyme A from Homo sapiens (Human).